The chain runs to 160 residues: Cyanate hydratase (160 aa).

Active-site residues include R100, E103, and S126.

It belongs to the cyanase family.

The enzyme catalyses cyanate + hydrogencarbonate + 3 H(+) = NH4(+) + 2 CO2. In terms of biological role, catalyzes the reaction of cyanate with bicarbonate to produce ammonia and carbon dioxide. The protein is Cyanate hydratase of Aspergillus flavus (strain ATCC 200026 / FGSC A1120 / IAM 13836 / NRRL 3357 / JCM 12722 / SRRC 167).